The sequence spans 578 residues: Type I restriction enzyme MjaVIII methylase subunit (578 aa).

S-adenosyl-L-methionine is bound by residues 250–255 (EVYTPI), 280–282 (SGS), glutamate 303, and 332–333 (DS).

This sequence belongs to the N(4)/N(6)-methyltransferase family. As to quaternary structure, the type I restriction/modification system is composed of three polypeptides R, M and S.

The catalysed reaction is a 2'-deoxyadenosine in DNA + S-adenosyl-L-methionine = an N(6)-methyl-2'-deoxyadenosine in DNA + S-adenosyl-L-homocysteine + H(+). The subtype gamma methyltransferase (M) subunit of a type I restriction enzyme. The M and S subunits together form a methyltransferase (MTase) that methylates A-2 on the top and A-3 on the bottom strand of the sequence 5'-GAYN(5)GTAA-3'. In the presence of the R subunit the complex can also act as an endonuclease, binding to the same target sequence but cutting the DNA some distance from this site. Whether the DNA is cut or modified depends on the methylation state of the target sequence. When the target site is unmodified, the DNA is cut. When the target site is hemimethylated, the complex acts as a maintenance MTase modifying the DNA so that both strands become methylated. After locating a non-methylated recognition site, the enzyme complex serves as a molecular motor that translocates DNA in an ATP-dependent manner until a collision occurs that triggers cleavage. This is Type I restriction enzyme MjaVIII methylase subunit from Methanocaldococcus jannaschii (strain ATCC 43067 / DSM 2661 / JAL-1 / JCM 10045 / NBRC 100440) (Methanococcus jannaschii).